We begin with the raw amino-acid sequence, 186 residues long: ADP-ribosylation factor-like protein 8A (186 aa).

The note=Mediates targeting to membranes intramembrane region spans 1-19 (MLALFNKLLDWFRALFWKE). GTP is bound by residues 29 to 35 (QYSGKTT), 71 to 75 (DIGGQ), and 130 to 133 (NKRD).

It belongs to the small GTPase superfamily. Arf family.

It localises to the late endosome membrane. The protein localises to the lysosome membrane. It is found in the cytoplasm. The protein resides in the cytoskeleton. Its subcellular location is the spindle. It localises to the cell projection. The protein localises to the axon. It is found in the synapse. Plays a role in lysosome motility. In neurons, mediates the anterograde axonal long-range transport of presynaptic lysosome-related vesicles required for presynaptic biogenesis and synaptic function. May play a role in chromosome segregation. This chain is ADP-ribosylation factor-like protein 8A (ARL8A), found in Gallus gallus (Chicken).